Consider the following 401-residue polypeptide: Imidazolonepropionase (401 aa).

2 residues coordinate Fe(3+): His66 and His68. Zn(2+) contacts are provided by His66 and His68. Arg75, Tyr138, and His171 together coordinate 4-imidazolone-5-propanoate. Tyr138 provides a ligand contact to N-formimidoyl-L-glutamate. His236 lines the Fe(3+) pocket. His236 is a binding site for Zn(2+). Gln239 serves as a coordination point for 4-imidazolone-5-propanoate. Position 311 (Asp311) interacts with Fe(3+). Asp311 contributes to the Zn(2+) binding site. N-formimidoyl-L-glutamate contacts are provided by Asn313 and Gly315. 4-imidazolone-5-propanoate is bound at residue Thr316.

This sequence belongs to the metallo-dependent hydrolases superfamily. HutI family. Requires Zn(2+) as cofactor. Fe(3+) serves as cofactor.

Its subcellular location is the cytoplasm. It carries out the reaction 4-imidazolone-5-propanoate + H2O = N-formimidoyl-L-glutamate. It functions in the pathway amino-acid degradation; L-histidine degradation into L-glutamate; N-formimidoyl-L-glutamate from L-histidine: step 3/3. In terms of biological role, catalyzes the hydrolytic cleavage of the carbon-nitrogen bond in imidazolone-5-propanoate to yield N-formimidoyl-L-glutamate. It is the third step in the universal histidine degradation pathway. The protein is Imidazolonepropionase of Pseudomonas savastanoi pv. phaseolicola (strain 1448A / Race 6) (Pseudomonas syringae pv. phaseolicola (strain 1448A / Race 6)).